A 313-amino-acid polypeptide reads, in one-letter code: MDKKSRVLIVGGTGYIGKRIVNASISLGHPTYVLFRPEVVSNIDKVQMLLYFKQLGAKLIEASLDDHQRLVDALKQVDVVISALAGGVLSHHILEQLKLVEAIKEAGNIKRFLPSEFGMDPDIMEHALQPGSITFIDKRKVRRAIEAASIPYTYVSSNMFAGYFAGSLAQLDGHMMPPRDKVLIYGDGNVKGIWVDEDDVGTYTIKSIDDPQTLNKTMYIRPPMNILSQKEVIQIWERLSEQNLDKIYISSQDFLADMKDKSYEEKIVRCHLYQIFFRGDLYNFEIGPNAIEATKLYPEVKYVTMDSYLERYV.

NADP(+)-binding positions include Gly-11–Gly-17, Arg-36, and Lys-45. Catalysis depends on Lys-138, which acts as the Proton acceptor. Arg-142 is a binding site for NADP(+). His-271 is a substrate binding site.

The protein belongs to the NmrA-type oxidoreductase family. Isoflavone reductase subfamily. Dimer.

The catalysed reaction is (+)-lariciresinol + NADP(+) = (+)-pinoresinol + NADPH + H(+). It carries out the reaction (-)-lariciresinol + NADP(+) = (-)-pinoresinol + NADPH + H(+). The enzyme catalyses (+)-secoisolariciresinol + NADP(+) = (-)-lariciresinol + NADPH + H(+). In terms of biological role, reductase involved in lignan biosynthesis. Catalyzes the enantioselective sequential conversion of (-)-pinoresinol into (-)-lariciresinol and of (-)-lariciresinol into (+)-secoisolariciresinol. Can also convert with a lower efficiency (+)-pinoresinol into (+)-lariciresinol, but not (+)-lariciresinol into (-)-secoisolariciresinol. Abstracts the 4R-hydride from the NADPH cofactor during catalysis. This is Bifunctional pinoresinol-lariciresinol reductase 1 (PLR_Tp1) from Thuja plicata (Western red-cedar).